Reading from the N-terminus, the 89-residue chain is Small ribosomal subunit protein uS15 (89 aa).

Belongs to the universal ribosomal protein uS15 family. In terms of assembly, part of the 30S ribosomal subunit. Forms a bridge to the 50S subunit in the 70S ribosome, contacting the 23S rRNA.

In terms of biological role, one of the primary rRNA binding proteins, it binds directly to 16S rRNA where it helps nucleate assembly of the platform of the 30S subunit by binding and bridging several RNA helices of the 16S rRNA. Forms an intersubunit bridge (bridge B4) with the 23S rRNA of the 50S subunit in the ribosome. The protein is Small ribosomal subunit protein uS15 of Vibrio cholerae serotype O1 (strain ATCC 39541 / Classical Ogawa 395 / O395).